A 252-amino-acid polypeptide reads, in one-letter code: MSPVKEDRANLSPRSPRHVAIIMDGNGRWAKNKGKLRVFGHKAGVKSVRRAVSFAAKHNLDALTLYAFSSENWNRPDQEVTALMELFVRALDSEVKSLHKHNVRLSIIGDISRFSGRLQERIRRSEKLTANNDGLKLNIAANYGGRWDIIQGVRHLAEQVQKGELQPTDISEESLNSYICLHEQSQVDLVIRTGGEHRISNFLLWQIAYAELYFTDVLWPDFDENVFEGALNAFAQRERRFGGTTPIDATAS.

Residue Asp24 is part of the active site. Asp24 serves as a coordination point for Mg(2+). Substrate contacts are provided by residues 25 to 28, Trp29, Arg37, His41, and 69 to 71; these read GNGR and SSE. The active-site Proton acceptor is Asn72. Positions 73, 75, and 192 each coordinate substrate. A Mg(2+)-binding site is contributed by His197. 198–200 contributes to the substrate binding site; that stretch reads RIS. Glu211 serves as a coordination point for Mg(2+).

This sequence belongs to the UPP synthase family. Homodimer. Mg(2+) serves as cofactor.

The catalysed reaction is 8 isopentenyl diphosphate + (2E,6E)-farnesyl diphosphate = di-trans,octa-cis-undecaprenyl diphosphate + 8 diphosphate. Catalyzes the sequential condensation of isopentenyl diphosphate (IPP) with (2E,6E)-farnesyl diphosphate (E,E-FPP) to yield (2Z,6Z,10Z,14Z,18Z,22Z,26Z,30Z,34E,38E)-undecaprenyl diphosphate (di-trans,octa-cis-UPP). UPP is the precursor of glycosyl carrier lipid in the biosynthesis of bacterial cell wall polysaccharide components such as peptidoglycan and lipopolysaccharide. In Yersinia pestis, this protein is Ditrans,polycis-undecaprenyl-diphosphate synthase ((2E,6E)-farnesyl-diphosphate specific).